A 228-amino-acid chain; its full sequence is Thymidine kinase (228 aa).

23 to 30 (GNIGCGKS) is an ATP binding site. The active-site Proton acceptor is Glu-50. Tyr-68, Gln-79, and Phe-109 together coordinate substrate. Arg-157 provides a ligand contact to ATP.

This sequence belongs to the DCK/DGK family.

It carries out the reaction thymidine + ATP = dTMP + ADP + H(+). This Ictaluridae (bullhead catfishes) protein is Thymidine kinase (TK).